The primary structure comprises 420 residues: MHKSAALSLRDAQFADMNMYCDVTDRTPIEAVHSCNNAESLNILNKLLARETDTALSQIFEQPTGKDWKELNTLQTILSLCSTVTMALLLGPDTAPDPVLHHHSTSFGEAIMSSCYRRTGYPRILRPFVWRFSSECRNLRKHFSLVRERLVPEVARRVAAARAADKTKDVRPSSLLDALIAAAFDNGSLSPDDQGRNDAAQVQLLADDLIFYHFELCKPTAFNIIFQLYAIMDHPEYKAPLREEALQALKLTNGDWTVETLKHAPKLESFTKETFRLYDISGFVSFRRVMKPLTLNSIGLSLRPGTILLSPCRNVHLDPEIYEDPTTFNGYRFYDSSREVCSPRVATTSLTFLTFSHGAGSCPARVLATQICRTIFIKFLLQYDVEPVQKEILPYGFTSGPVYMPNPSVMMRIRPRSDGK.

Cys-362 contacts heme.

It belongs to the cytochrome P450 family. It depends on heme as a cofactor.

It carries out the reaction 2 7-demethylsiderin + NADPH + O2 = orlandin + NADP(+) + 2 H2O. Its pathway is secondary metabolite biosynthesis. In terms of biological role, non-reducing polyketide synthase; part of the gene cluster that mediates the biosynthesis of the bicoumarin kotanin. The non-reducing polyketide synthase ktnS first catalyzes the formation of the pentaketidic 4,7-dihydroxy-5-methylcoumarin from acetyl coenzyme A and 4 malonyl coenzyme A molecules. Further O-methylation by ktnB leads to the formation of 7-demethylsiderin. Then, an oxidative phenol coupling catalyzed by the cytochrome P450 monooxygenase ktnC forms the 8,8'-dimer P-orlandin via dimerization the monomeric precursor, 7-demethylsiderin. P-orlandin is subsequently O-methylated in a stepwise fashion to demethylkotanin and kotanin. The polypeptide is Bicoumarin synthase ktnC (Aspergillus niger (strain ATCC MYA-4892 / CBS 513.88 / FGSC A1513)).